A 2517-amino-acid chain; its full sequence is Protein capicua homolog (2517 aa).

Disordered stretches follow at residues 1-197, 300-325, 342-483, 531-579, 608-640, and 658-767; these read MKPM…SGSY, LSPG…HREP, PWEP…KYKK, EMEG…RGDS, SSRS…FGFR, and VRSR…FRAV. Acidic residues predominate over residues 57–67; the sequence is EEAEEGEEEEA. Basic and acidic residues predominate over residues 91–101; sequence EDPKGDGEAGR. Composition is skewed to low complexity over residues 158–167 and 300–313; these read TSTRSSSTDT and LSPG…LPGS. Residues 396–405 are compositionally biased toward basic and acidic residues; sequence HCEEGEEKHP. Pro residues predominate over residues 414–428; sequence LPLPPPQLLSPPPKS. A compositionally biased stretch (low complexity) spans 451-477; the sequence is GSRSSSVASLEKGTAPAARARTPLTAA. A compositionally biased stretch (polar residues) spans 608-619; that stretch reads SSRSGTPSFSPV. A compositionally biased stretch (pro residues) spans 677–686; the sequence is DLGPHPPPPA. The segment covering 698–707 has biased composition (polar residues); it reads TFQTNLTFTV. The span at 726–735 shows a compositional bias: gly residues; that stretch reads GAPGAGGGGA. A phosphoserine mark is found at Ser-776 and Ser-780. Disordered regions lie at residues 812-842, 955-1110, 1179-1220, 1235-1274, 1290-1347, 1379-1539, and 1595-1628; these read IVRN…PGRG, PSQP…DHIR, CNKD…APGV, SDTK…SLDG, SGPA…TSDE, RVTD…ILQT, and IASK…RVPG. The interval 937–955 is interaction with ATXN1; sequence EPRSVAVFPWHSLVPFLAP. Positions 959-981 are enriched in polar residues; sequence DPSVQPSEAQQPASHPVASNQSK. Residues Ser-1055 and Ser-1082 each carry the phosphoserine modification. Composition is skewed to basic and acidic residues over residues 1087–1110, 1179–1188, and 1200–1209; these read PKER…DHIR, CNKDRKKSSS, and GHKETRERSM. Arg-1099 carries the post-translational modification Omega-N-methylarginine. A DNA-binding region (HMG box) is located at residues 1109–1177; sequence IRRPMNAFMI…AHFKAHPDWK (69 aa). Position 1186 is a phosphoserine (Ser-1186). The span at 1235-1245 shows a compositional bias: polar residues; the sequence is SDTKAPGSSSC. At Ser-1271 the chain carries Phosphoserine. Residues 1305-1323 are compositionally biased toward low complexity; the sequence is GAPGPFAAPGEGGALAATG. Phosphoserine occurs at positions 1340, 1345, and 1405. Residues 1418–1430 show a composition bias toward pro residues; it reads PLDPEPPGPPDPP. Residues 1439-1456 are compositionally biased toward low complexity; it reads SAPSSSASSPASSSASAA. The span at 1457-1474 shows a compositional bias: polar residues; sequence TSFSLGSGTFKAQESGQG. Ser-1609, Ser-1630, and Ser-1648 each carry phosphoserine. Arg-1772 bears the Asymmetric dimethylarginine mark. A disordered region spans residues 1799 to 1818; that stretch reads QSVPSAPPPKAQSVSPVQAP. Omega-N-methylarginine is present on Arg-1843. Disordered regions lie at residues 2039–2064, 2100–2342, and 2430–2517; these read AATI…FPSA, SFEA…AKCE, and AATP…ATGR. The span at 2051-2064 shows a compositional bias: low complexity; sequence ATATPAPTSPFPSA. 2 stretches are compositionally biased toward pro residues: residues 2110 to 2119 and 2136 to 2145; these read GPAPRQPLEP and PTPPAPPPLP. Low complexity predominate over residues 2146-2155; the sequence is ETWTPTARSS. Position 2177 is an N6-acetyllysine (Lys-2177). Residues 2198–2209 are compositionally biased toward pro residues; it reads PPTPPSPAPAPA. A Phosphothreonine modification is found at Thr-2200. At Ser-2203 the chain carries Phosphoserine. The segment covering 2210–2225 has biased composition (low complexity); the sequence is VAPGGSSESSSGRAAG. Residues 2249–2278 are compositionally biased toward basic and acidic residues; sequence KTFDSVDNRVLSEVDFEERFAELPEFRPEE. Phosphoserine occurs at positions 2260, 2282, 2287, 2291, 2298, and 2306. Thr-2307 is subject to Phosphothreonine. Phosphoserine is present on residues Ser-2311 and Ser-2318. Residues 2457 to 2469 are compositionally biased toward pro residues; the sequence is APTPSPAGGPDPT. The residue at position 2504 (Ser-2504) is a Phosphoserine.

Found in a complex with ATXN1 and ATXN1L. In terms of assembly, interacts with ATXN1. As to expression, expressed in fetal brain.

It localises to the nucleus. In terms of biological role, transcriptional repressor which plays a role in development of the central nervous system (CNS). In concert with ATXN1 and ATXN1L, involved in brain development. The chain is Protein capicua homolog (CIC) from Homo sapiens (Human).